The chain runs to 244 residues: 2,3-bisphosphoglycerate-dependent phosphoglycerate mutase (244 aa).

Residues 8-15 (RHGESNWN), 21-22 (TG), arginine 60, 87-90 (ERHY), lysine 98, 114-115 (RR), and 181-182 (GN) each bind substrate. Histidine 9 (tele-phosphohistidine intermediate) is an active-site residue. Glutamate 87 serves as the catalytic Proton donor/acceptor.

Belongs to the phosphoglycerate mutase family. BPG-dependent PGAM subfamily.

The enzyme catalyses (2R)-2-phosphoglycerate = (2R)-3-phosphoglycerate. Its pathway is carbohydrate degradation; glycolysis; pyruvate from D-glyceraldehyde 3-phosphate: step 3/5. In terms of biological role, catalyzes the interconversion of 2-phosphoglycerate and 3-phosphoglycerate. This Frankia alni (strain DSM 45986 / CECT 9034 / ACN14a) protein is 2,3-bisphosphoglycerate-dependent phosphoglycerate mutase.